Consider the following 353-residue polypeptide: Photosystem II D2 protein (353 aa).

Threonine 2 is modified (N-acetylthreonine). Threonine 2 bears the Phosphothreonine mark. Residues cysteine 41–threonine 61 form a helical membrane-spanning segment. Residue histidine 118 participates in chlorophyll a binding. Residues glycine 125–proline 141 form a helical membrane-spanning segment. Pheophytin a contacts are provided by glutamine 130 and asparagine 143. A helical transmembrane segment spans residues valine 153–serine 166. Chlorophyll a is bound at residue histidine 198. The chain crosses the membrane as a helical span at residues alanine 208–aspartate 228. 2 residues coordinate a plastoquinone: histidine 215 and phenylalanine 262. Histidine 215 lines the Fe cation pocket. A Fe cation-binding site is contributed by histidine 269. The helical transmembrane segment at glycine 279–arginine 295 threads the bilayer.

It belongs to the reaction center PufL/M/PsbA/D family. As to quaternary structure, PSII is composed of 1 copy each of membrane proteins PsbA, PsbB, PsbC, PsbD, PsbE, PsbF, PsbH, PsbI, PsbJ, PsbK, PsbL, PsbM, PsbT, PsbX, PsbY, PsbZ, Psb30/Ycf12, at least 3 peripheral proteins of the oxygen-evolving complex and a large number of cofactors. It forms dimeric complexes. The D1/D2 heterodimer binds P680, chlorophylls that are the primary electron donor of PSII, and subsequent electron acceptors. It shares a non-heme iron and each subunit binds pheophytin, quinone, additional chlorophylls, carotenoids and lipids. There is also a Cl(-1) ion associated with D1 and D2, which is required for oxygen evolution. The PSII complex binds additional chlorophylls, carotenoids and specific lipids. is required as a cofactor.

It is found in the plastid. The protein resides in the chloroplast thylakoid membrane. The catalysed reaction is 2 a plastoquinone + 4 hnu + 2 H2O = 2 a plastoquinol + O2. Functionally, photosystem II (PSII) is a light-driven water:plastoquinone oxidoreductase that uses light energy to abstract electrons from H(2)O, generating O(2) and a proton gradient subsequently used for ATP formation. It consists of a core antenna complex that captures photons, and an electron transfer chain that converts photonic excitation into a charge separation. The D1/D2 (PsbA/PsbD) reaction center heterodimer binds P680, the primary electron donor of PSII as well as several subsequent electron acceptors. D2 is needed for assembly of a stable PSII complex. In Phalaenopsis aphrodite subsp. formosana (Moth orchid), this protein is Photosystem II D2 protein.